Here is a 125-residue protein sequence, read N- to C-terminus: Small ribosomal subunit protein uS12 (125 aa).

3-methylthioaspartic acid is present on Asp-89. The tract at residues 105 to 125 (QGVKDRKQSRSKYGAKKPKAK) is disordered. Over residues 113–125 (SRSKYGAKKPKAK) the composition is skewed to basic residues.

This sequence belongs to the universal ribosomal protein uS12 family. As to quaternary structure, part of the 30S ribosomal subunit. Contacts proteins S8 and S17. May interact with IF1 in the 30S initiation complex.

Its function is as follows. With S4 and S5 plays an important role in translational accuracy. Interacts with and stabilizes bases of the 16S rRNA that are involved in tRNA selection in the A site and with the mRNA backbone. Located at the interface of the 30S and 50S subunits, it traverses the body of the 30S subunit contacting proteins on the other side and probably holding the rRNA structure together. The combined cluster of proteins S8, S12 and S17 appears to hold together the shoulder and platform of the 30S subunit. This chain is Small ribosomal subunit protein uS12, found in Delftia acidovorans (strain DSM 14801 / SPH-1).